We begin with the raw amino-acid sequence, 875 residues long: Probable serine/threonine-protein kinase samkC (875 aa).

Residues 1 to 12 are compositionally biased toward polar residues; that stretch reads METTTITSILDD. Residues 1-47 form a disordered region; sequence METTTITSILDDNNNNNNNNNNNNNNNNNNNNNNNNNNNNNNNNNYN. Low complexity predominate over residues 13-45; that stretch reads NNNNNNNNNNNNNNNNNNNNNNNNNNNNNNNNN. In terms of domain architecture, SAM spans 51–116; the sequence is WDNEMVCKWL…SEFDDLKNIF (66 aa). A coiled-coil region spans residues 135–162; the sequence is DNNNLNNLNNNNNNNNNNNNNNNNNNNN. Over residues 136–168 the composition is skewed to low complexity; it reads NNNLNNLNNNNNNNNNNNNNNNNNNNNNNNNNN. Residues 136-170 form a disordered region; it reads NNNLNNLNNNNNNNNNNNNNNNNNNNNNNNNNNKT. A Protein kinase domain is found at 181–452; the sequence is YVFIKQMKGS…SKQLLNFSWF (272 aa). ATP contacts are provided by residues 187–195 and lysine 210; that span reads MKGSVNCSL. The active-site Proton acceptor is aspartate 301. Disordered regions lie at residues 331 to 362 and 461 to 718; these read NNND…NDTN and SEPQ…NNNN. Over residues 474–554 the composition is skewed to low complexity; it reads PQTSQSKPKP…KPKPSSSLSS (81 aa). The segment covering 555-564 has biased composition (pro residues); it reads EPPPLEPQPK. Low complexity-rich tracts occupy residues 565–581, 589–611, and 617–653; these read PQTS…LSSS, QPTQ…SQPT, and QPKS…QQQK. A coiled-coil region spans residues 626 to 655; sequence QSKQQQQQQQQQQQQQQQQQQQQQQQQKSK. Residues 654–663 are compositionally biased toward basic and acidic residues; the sequence is SKPEQSKSKP. The segment covering 664 to 718 has biased composition (low complexity); sequence EQSQSKPQPGQPLQSPSKPQPIPSTTKTTTTTTTTTTPNNNNNNNNNNNNNNNNN. Residues 842–862 traverse the membrane as a helical segment; sequence TLILYTFYYFLSNTLIYQIIL.

The protein belongs to the protein kinase superfamily. Ser/Thr protein kinase family.

It localises to the membrane. It catalyses the reaction L-seryl-[protein] + ATP = O-phospho-L-seryl-[protein] + ADP + H(+). It carries out the reaction L-threonyl-[protein] + ATP = O-phospho-L-threonyl-[protein] + ADP + H(+). The polypeptide is Probable serine/threonine-protein kinase samkC (samkC) (Dictyostelium discoideum (Social amoeba)).